The following is a 103-amino-acid chain: Endoribonuclease MazF3 (103 aa).

The protein belongs to the PemK/MazF family. Forms a complex with cognate antitoxin MazE3.

Toxic component of a type II toxin-antitoxin (TA) system. Acts as an endoribonuclease, cleaving in U-rich regions. Neutralized by cognate antitoxin MazE3. In Mycobacterium tuberculosis (strain CDC 1551 / Oshkosh), this protein is Endoribonuclease MazF3 (mazF3).